The following is a 249-amino-acid chain: Aliphatic sulfonates import ATP-binding protein SsuB 2 (249 aa).

An ABC transporter domain is found at L5–A233. G37–S44 provides a ligand contact to ATP.

Belongs to the ABC transporter superfamily. Aliphatic sulfonates importer (TC 3.A.1.17.2) family. As to quaternary structure, the complex is composed of two ATP-binding proteins (SsuB), two transmembrane proteins (SsuC) and a solute-binding protein (SsuA).

It is found in the cell inner membrane. It catalyses the reaction ATP + H2O + aliphatic sulfonate-[sulfonate-binding protein]Side 1 = ADP + phosphate + aliphatic sulfonateSide 2 + [sulfonate-binding protein]Side 1.. Part of the ABC transporter complex SsuABC involved in aliphatic sulfonates import. Responsible for energy coupling to the transport system. The sequence is that of Aliphatic sulfonates import ATP-binding protein SsuB 2 from Pseudomonas aeruginosa (strain ATCC 15692 / DSM 22644 / CIP 104116 / JCM 14847 / LMG 12228 / 1C / PRS 101 / PAO1).